The sequence spans 75 residues: Protein Tlp homolog (75 aa).

It belongs to the Tlp family.

The sequence is that of Protein Tlp homolog from Clostridium acetobutylicum (strain ATCC 824 / DSM 792 / JCM 1419 / IAM 19013 / LMG 5710 / NBRC 13948 / NRRL B-527 / VKM B-1787 / 2291 / W).